The sequence spans 430 residues: MARLAPHTLLLALFVFLFGSCTAQNCTTNNLQVTYPAPVAADGWEYRLISTGLTAPRSIVFDSTGGLLVLDAGVGVRRLTLQDNGGTCLSVTANATLIADTALNHGLAISADGGTIYASTVNDVYAYTYNEQTNTVDPTTRRTVVTNMTNTDHVTRTLLLSSRLPNELLVSRGSAANEDPQARNVTSGHSQIRAYDISTLAATDPPFDFVAGTLIGWGLRDSVGVGENPTNGGIWSVENSVDDLTREGVDVHQDNPGEELNFHGILGNTANQGGNYGYPDCYALWSTAGFPDLGALEVGDQFASDNATAGVTDATCNTNFVDPRLVFQAHVSPLDIKFNTNGTTAYITFHGSSDIVSVAFGLNGQPTSPMDSTTAANNILTSPDLTQCPDDCFTPVGLTFDTIGRLFFSSDSTGEIFVLQQSADDGNGDG.

The signal sequence occupies residues 1–23; that stretch reads MARLAPHTLLLALFVFLFGSCTA. N-linked (GlcNAc...) asparagine glycosylation is present at Asn-25. Arg-57 is a pyrroloquinoline quinone binding site. N-linked (GlcNAc...) asparagine glycans are attached at residues Asn-94 and Asn-147. Residue His-153 coordinates pyrroloquinoline quinone. N-linked (GlcNAc...) asparagine glycosylation occurs at Asn-184. Arg-220 is a binding site for pyrroloquinoline quinone. Ser-240 and Asp-242 together coordinate Ca(2+). The cysteines at positions 281 and 316 are disulfide-linked. A glycan (N-linked (GlcNAc...) asparagine) is linked at Asn-306. His-330 is a binding site for pyrroloquinoline quinone. Asn-341 carries N-linked (GlcNAc...) asparagine glycosylation. His-350 provides a ligand contact to pyrroloquinoline quinone. A disulfide bridge connects residues Cys-388 and Cys-392.

The protein belongs to the sugar dehydrogenase AA12 family. Ca(2+) is required as a cofactor. The cofactor is pyrroloquinoline quinone.

It is found in the secreted. Functionally, pyrroloquinoline quinone (PPQ)-dependent oxidoreductase that catalyzes the oxidation of various sugars such as L-fucose. The polypeptide is Pyrroloquinoline quinone-dependent sugar dehydrogenase (Hypocrea jecorina (strain QM6a) (Trichoderma reesei)).